The primary structure comprises 212 residues: Lipopolysaccharide core heptose(II)-phosphate phosphatase (212 aa).

The signal sequence occupies residues 1 to 32; it reads MSIGGVYELAFCRSSLKSKKYFIILLALAAIA.

Belongs to the phosphoglycerate mutase family. Ais subfamily.

It is found in the periplasm. It participates in bacterial outer membrane biogenesis; lipopolysaccharide metabolism. Catalyzes the dephosphorylation of heptose(II) of the outer membrane lipopolysaccharide core. This Shigella boydii serotype 4 (strain Sb227) protein is Lipopolysaccharide core heptose(II)-phosphate phosphatase.